The following is a 147-amino-acid chain: Hemoglobin subunit epsilon-1 (147 aa).

Residues 3–147 enclose the Globin domain; the sequence is HFTAEEKAAI…VATALAHKYH (145 aa). Heme b contacts are provided by histidine 64 and histidine 93.

Belongs to the globin family. Heterotetramer of two epsilon chains and two alpha chains. In terms of tissue distribution, red blood cells.

Beta-type chain found in early embryos. This is Hemoglobin subunit epsilon-1 (HBE1) from Capra hircus (Goat).